The primary structure comprises 845 residues: U-box domain-containing protein 52 (845 aa).

2 disordered regions span residues Arg-180–Glu-210 and Ser-229–Thr-258. Positions Ser-187 to Ser-204 are enriched in low complexity. Over residues Met-236–Thr-251 the composition is skewed to polar residues. Positions Ser-351 to Leu-468 form a coiled coil. One can recognise a Protein kinase domain in the interval Phe-490–Leu-754. Residues Ile-496–Val-504 and Lys-517 each bind ATP. Asp-612 serves as the catalytic Proton acceptor. A U-box domain is found at Gly-774–Arg-845.

This sequence belongs to the protein kinase superfamily. Ser/Thr protein kinase family.

The enzyme catalyses L-seryl-[protein] + ATP = O-phospho-L-seryl-[protein] + ADP + H(+). It carries out the reaction L-threonyl-[protein] + ATP = O-phospho-L-threonyl-[protein] + ADP + H(+). It catalyses the reaction S-ubiquitinyl-[E2 ubiquitin-conjugating enzyme]-L-cysteine + [acceptor protein]-L-lysine = [E2 ubiquitin-conjugating enzyme]-L-cysteine + N(6)-ubiquitinyl-[acceptor protein]-L-lysine.. The protein operates within protein modification; protein ubiquitination. Functions as an E3 ubiquitin ligase. The chain is U-box domain-containing protein 52 (PUB52) from Arabidopsis thaliana (Mouse-ear cress).